The chain runs to 220 residues: MASRVDETTVPSYYYYVDPETTYTYQQPNPLQDLISVYGLDDISRQVARTNLDGTKAVKLRKSYKNQIADLSGKFSTIPTRENGKGGQIAHILFQNNPDMMIQPPQQGQNMSEQQWREQLRNRDIALFQPPNFDWDLCSSVLSQFERSYPSEFANQNQGGAQAPFDIDDLAFDLDGTGKSQSGSNSGNNSKKRKNKSSGSSMATPTHSDSHEDMKRRRLE.

Residues 171–220 (AFDLDGTGKSQSGSNSGNNSKKRKNKSSGSSMATPTHSDSHEDMKRRRLE) form a disordered region. The span at 178-189 (GKSQSGSNSGNN) shows a compositional bias: low complexity. Basic and acidic residues predominate over residues 208 to 220 (SDSHEDMKRRRLE).

It belongs to the Mediator complex subunit 19 family. Component of the Mediator complex, which is composed of at least 21 subunits that form three structurally distinct submodules. The Mediator head module contains MED6, MED8, MED11, SRB4/MED17, SRB5/MED18, ROX3/MED19, SRB2/MED20 and SRB6/MED22, the middle module contains MED1, MED4, NUT1/MED5, MED7, CSE2/MED9, NUT2/MED10, SRB7/MED21 and SOH1/MED31, and the tail module contains MED2, PGD1/MED3, RGR1/MED14, GAL11/MED15 and SIN4/MED16. The head and the middle modules interact directly with RNA polymerase II, whereas the elongated tail module interacts with gene-specific regulatory proteins.

It localises to the nucleus. Component of the Mediator complex, a coactivator involved in the regulated transcription of nearly all RNA polymerase II-dependent genes. Mediator functions as a bridge to convey information from gene-specific regulatory proteins to the basal RNA polymerase II transcription machinery. The Mediator complex, having a compact conformation in its free form, is recruited to promoters by direct interactions with regulatory proteins and serves for the assembly of a functional preinitiation complex with RNA polymerase II and the general transcription factors. The Mediator complex unfolds to an extended conformation and partially surrounds RNA polymerase II, specifically interacting with the unphosphorylated form of the C-terminal domain (CTD) of RNA polymerase II. The Mediator complex dissociates from the RNA polymerase II holoenzyme and stays at the promoter when transcriptional elongation begins. The sequence is that of Mediator of RNA polymerase II transcription subunit 19 (ROX3) from Saccharomyces cerevisiae (strain ATCC 204508 / S288c) (Baker's yeast).